A 506-amino-acid polypeptide reads, in one-letter code: Probable alpha-L-arabinofuranosidase B (506 aa).

The first 26 residues, 1–26, serve as a signal peptide directing secretion; that stretch reads MLPQLSIERASVFALGLIATGSLVVA. A catalytic region spans residues 27–343; it reads GPCDIYSAGG…ANIVAAKYAT (317 aa). 3 disulfides stabilise this stretch: Cys29–Cys39, Cys89–Cys94, and Cys184–Cys185. Asp227 provides a ligand contact to substrate. Glu229 acts as the Nucleophile in catalysis. Asn230 contacts substrate. Residue Asn240 is glycosylated (N-linked (GlcNAc...) asparagine). Position 304 (Gly304) interacts with substrate. The Proton donor role is filled by Asp305. Residues 344–506 form an ABD region; that stretch reads ASLTSGPKLT…VSWVISTGFA (163 aa). Cysteines 409 and 447 form a disulfide. Residues His424, Asn426, Phe427, Asp443, His471, Leu476, and Asp496 each coordinate substrate.

This sequence belongs to the glycosyl hydrolase 54 family.

The protein resides in the secreted. It carries out the reaction Hydrolysis of terminal non-reducing alpha-L-arabinofuranoside residues in alpha-L-arabinosides.. It participates in glycan metabolism; L-arabinan degradation. Alpha-L-arabinofuranosidase involved in the degradation of arabinoxylan, a major component of plant hemicellulose. Able to hydrolyze 1,5-, 1,3- and 1,2-alpha-linkages not only in L-arabinofuranosyl oligosaccharides, but also in polysaccharides containing terminal non-reducing L-arabinofuranoses in side chains, like L-arabinan, arabinogalactan and arabinoxylan. The chain is Probable alpha-L-arabinofuranosidase B (abfB) from Aspergillus fumigatus (strain ATCC MYA-4609 / CBS 101355 / FGSC A1100 / Af293) (Neosartorya fumigata).